A 67-amino-acid polypeptide reads, in one-letter code: Phycobilisome 7.8 kDa linker polypeptide, allophycocyanin-associated, core (67 aa).

Residues 1 to 56 enclose the CpcD-like domain; the sequence is MRMFKITACVPSQTRIRTQRELQNTYFTKLVPYENWFREQQRIQKMGGKIVKVELF.

It belongs to the phycobilisome linker protein family.

It is found in the cellular thylakoid membrane. Its function is as follows. Rod linker protein, associated with allophycocyanin. Linker polypeptides determine the state of aggregation and the location of the disk-shaped phycobiliprotein units within the phycobilisome and modulate their spectroscopic properties in order to mediate a directed and optimal energy transfer. This Thermosynechococcus vestitus (strain NIES-2133 / IAM M-273 / BP-1) protein is Phycobilisome 7.8 kDa linker polypeptide, allophycocyanin-associated, core (apcC).